Reading from the N-terminus, the 237-residue chain is Neurogenin-1 (237 aa).

The tract at residues 35 to 83 (LQQAASASGPPAPARRGAPNISRASEVPGAQDDEQERRRRRGRTRVRSE) is disordered. The segment covering 38–53 (AASASGPPAPARRGAP) has biased composition (low complexity). Positions 92-144 (SRRVKANDRERNRMHNLNAALDALRSVLPSFPDDTKLTKIETLRFAYNYIWAL) constitute a bHLH domain. Residues 175–209 (GPPSPASDAESWGSGAAAASPLSDPSSPAASEDFT) form a disordered region. A compositionally biased stretch (low complexity) spans 180 to 207 (ASDAESWGSGAAAASPLSDPSSPAASED).

Efficient DNA binding requires dimerization with another bHLH protein. In terms of tissue distribution, expression restricted to the embryonic nervous system.

Its subcellular location is the nucleus. Its function is as follows. Acts as a transcriptional regulator. Involved in the initiation of neuronal differentiation. Activates transcription by binding to the E box (5'-CANNTG-3'). Associates with chromatin to enhancer regulatory elements in genes encoding key transcriptional regulators of neurogenesis. This Homo sapiens (Human) protein is Neurogenin-1 (NEUROG1).